Consider the following 277-residue polypeptide: Probable endonuclease 4 (277 aa).

Positions 67, 107, 142, 176, 179, 211, 224, 226, and 256 each coordinate Zn(2+).

This sequence belongs to the AP endonuclease 2 family. It depends on Zn(2+) as a cofactor.

The catalysed reaction is Endonucleolytic cleavage to 5'-phosphooligonucleotide end-products.. Functionally, endonuclease IV plays a role in DNA repair. It cleaves phosphodiester bonds at apurinic or apyrimidinic (AP) sites, generating a 3'-hydroxyl group and a 5'-terminal sugar phosphate. This Akkermansia muciniphila (strain ATCC BAA-835 / DSM 22959 / JCM 33894 / BCRC 81048 / CCUG 64013 / CIP 107961 / Muc) protein is Probable endonuclease 4.